The primary structure comprises 108 residues: Small ribosomal subunit protein eS25x (108 aa).

The tract at residues 1–36 (MAPKKDKVPPPSSKPAKSGGGKQKKKKWSKGKQKEK) is disordered. The segment covering 22 to 31 (KQKKKKWSKG) has biased composition (basic residues).

Belongs to the eukaryotic ribosomal protein eS25 family.

The sequence is that of Small ribosomal subunit protein eS25x (RPS25D) from Arabidopsis thaliana (Mouse-ear cress).